A 370-amino-acid chain; its full sequence is DNA replication and repair protein RecF (370 aa).

30–37 (GENAQGKT) contacts ATP.

The protein belongs to the RecF family.

The protein resides in the cytoplasm. The RecF protein is involved in DNA metabolism; it is required for DNA replication and normal SOS inducibility. RecF binds preferentially to single-stranded, linear DNA. It also seems to bind ATP. The chain is DNA replication and repair protein RecF from Listeria innocua serovar 6a (strain ATCC BAA-680 / CLIP 11262).